Here is a 400-residue protein sequence, read N- to C-terminus: Na(+)/H(+) antiporter NhaA (400 aa).

Helical transmembrane passes span 26–46 (AGGI…NSPL), 71–91 (LIHW…GMEV), 107–127 (IFPA…YWFI), 137–157 (GWAI…ALLS), 166–186 (IFLL…IALF), 189–209 (HGLS…LILL), 212–232 (FKVS…ASVL), 233–253 (KSGV…PLKG), 273–293 (FVIL…GIDV), 299–319 (PLLL…IFGF), 340–360 (IFAV…LASL), and 373–393 (LSRL…YLFL).

This sequence belongs to the NhaA Na(+)/H(+) (TC 2.A.33) antiporter family.

The protein resides in the cell inner membrane. The catalysed reaction is Na(+)(in) + 2 H(+)(out) = Na(+)(out) + 2 H(+)(in). Functionally, na(+)/H(+) antiporter that extrudes sodium in exchange for external protons. The sequence is that of Na(+)/H(+) antiporter NhaA from Haemophilus influenzae (strain PittGG).